The primary structure comprises 409 residues: Phospholipase ABHD3 (409 aa).

The chain crosses the membrane as a helical; Signal-anchor for type II membrane protein span at residues 26 to 46 (GFFGSGVGLSLILGFSVAYAF). The AB hydrolase-1 domain occupies 140–233 (PTILLLPGLT…MLLLNYLGKI (94 aa)). Catalysis depends on charge relay system residues Ser220, Asp346, and His375.

This sequence belongs to the AB hydrolase superfamily. AB hydrolase 4 family.

The protein localises to the membrane. The enzyme catalyses a 1,2-diacyl-sn-glycero-3-phosphocholine + H2O = a 1-acyl-sn-glycero-3-phosphocholine + a fatty acid + H(+). The catalysed reaction is a 1,2-diacyl-sn-glycero-3-phosphocholine + H2O = a 2-acyl-sn-glycero-3-phosphocholine + a fatty acid + H(+). It carries out the reaction 1-tetradecanoyl-2-(9Z,12Z-octadecadienoyl)-sn-glycero-3-phosphocholine + H2O = 2-(9Z,12Z-octadecadienoyl)-sn-glycero-3-phosphocholine + tetradecanoate + H(+). It catalyses the reaction 1-tetradecanoyl-2-(9Z,12Z-octadecadienoyl)-sn-glycero-3-phosphocholine + H2O = 1-tetradecanoyl-sn-glycero-3-phosphocholine + (9Z,12Z)-octadecadienoate + H(+). The enzyme catalyses 1-tetradecanoyl-2-(5Z,8Z,11Z,14Z-eicosatetraenoyl)-sn-glycero-3-phosphocholine + H2O = 2-(5Z,8Z,11Z,14Z)-eicosatetraenoyl-sn-glycero-3-phosphocholine + tetradecanoate + H(+). The catalysed reaction is 1-tetradecanoyl-2-(4Z,7Z,10Z,13Z,16Z,19Z-docosahexaenoyl)-sn-glycero-3-phosphocholine + H2O = 2-(4Z,7Z,10Z,13Z,16Z,19Z-docosahexaenoyl)-sn-glycero-3-phosphocholine + tetradecanoate + H(+). It carries out the reaction 1,2-ditetradecanoyl-sn-glycero-3-phosphocholine + H2O = 2-tetradecanoyl-sn-glycero-3-phosphocholine + tetradecanoate + H(+). It catalyses the reaction 1-octadecanoyl-2-acetyl-sn-glycero-3-phosphocholine + H2O = 1-octadecanoyl-sn-glycero-3-phosphocholine + acetate + H(+). The enzyme catalyses 1,2-ditetradecanoyl-sn-glycero-3-phosphocholine + H2O = 1-tetradecanoyl-sn-glycero-3-phosphocholine + tetradecanoate + H(+). The catalysed reaction is 1-octadecanoyl-2-pentanoyl-sn-glycero-3-phosphocholine + H2O = pentanoate + 1-octadecanoyl-sn-glycero-3-phosphocholine + H(+). It carries out the reaction 1-octadecanoyl-2-hexanoyl-sn-glycero-3-phosphocholine + H2O = hexanoate + 1-octadecanoyl-sn-glycero-3-phosphocholine + H(+). It catalyses the reaction 1-octadecanoyl-2-octanoyl-sn-glycero-3-phosphocholine + H2O = 1-octadecanoyl-sn-glycero-3-phosphocholine + octanoate + H(+). The enzyme catalyses 1-octadecanoyl-2-nonanoyl-sn-glycero-3-phosphocholine + H2O = nonanoate + 1-octadecanoyl-sn-glycero-3-phosphocholine + H(+). The catalysed reaction is 1-O-hexadecyl-2-nonadioyl-sn-glycero-3-phosphocholine + H2O = nonanedioate + 1-O-hexadecyl-sn-glycero-3-phosphocholine + H(+). It carries out the reaction 1-hexadecanoyl-2-nonadioyl-sn-glycero-3-phosphocholine + H2O = nonanedioate + 1-hexadecanoyl-sn-glycero-3-phosphocholine + H(+). It catalyses the reaction 1-hexadecanoyl-2-(9-oxononanoyl)-sn-glycero-3-phosphocholine + H2O = 9-oxononanoate + 1-hexadecanoyl-sn-glycero-3-phosphocholine + H(+). The enzyme catalyses 1-hexadecanoyl-2-(5-oxopentanoyl)-sn-glycero-3-phosphocholine + H2O = 5-oxopentanoate + 1-hexadecanoyl-sn-glycero-3-phosphocholine + H(+). The catalysed reaction is 1-hexadecanoyl-2-glutaroyl-sn-glycero-3-phosphocholine + H2O = glutarate + 1-hexadecanoyl-sn-glycero-3-phosphocholine + H(+). It carries out the reaction 1-O-hexadecyl-2-acetyl-sn-glycero-3-phosphocholine + H2O = 1-O-hexadecyl-sn-glycero-3-phosphocholine + acetate + H(+). Phospholipase that may play a role in phospholipids remodeling. May selectively cleave myristate (C14)-containing phosphatidylcholines through its predominant phospholipase 1 activity, cleaving preferentially acyl groups in sn1 position. In parallel, may have a minor phospholipase 2 activity acting on acyl groups in position sn2. In addition to (C14)-containing phosphatidylcholines, may also act on other medium-chain-containing and oxidatively truncated phospholipids. The polypeptide is Phospholipase ABHD3 (Homo sapiens (Human)).